Reading from the N-terminus, the 544-residue chain is Chaperonin GroEL (544 aa).

ATP contacts are provided by residues 29 to 32 (TLGP), 86 to 90 (DGTTT), Gly-413, 476 to 478 (NAA), and Asp-492.

Belongs to the chaperonin (HSP60) family. As to quaternary structure, forms a cylinder of 14 subunits composed of two heptameric rings stacked back-to-back. Interacts with the co-chaperonin GroES.

It localises to the cytoplasm. The catalysed reaction is ATP + H2O + a folded polypeptide = ADP + phosphate + an unfolded polypeptide.. In terms of biological role, together with its co-chaperonin GroES, plays an essential role in assisting protein folding. The GroEL-GroES system forms a nano-cage that allows encapsulation of the non-native substrate proteins and provides a physical environment optimized to promote and accelerate protein folding. This is Chaperonin GroEL from Bacillus pumilus (strain SAFR-032).